The chain runs to 450 residues: Carbamoyl phosphate synthase arginine-specific small chain (450 aa).

Residues 1 to 29 (MFAARLFKAMPARASAFPSVNASIQSRFM) constitute a mitochondrion transit peptide. Residues 220 to 407 (HVAVIDCGVK…LDSVRKYKAS (188 aa)) enclose the Glutamine amidotransferase type-1 domain. Catalysis depends on cysteine 296, which acts as the Nucleophile. Active-site residues include histidine 380 and glutamate 382.

Belongs to the CarA family. As to quaternary structure, heterodimer composed of 2 chains; the small (or glutamine) chain promotes the hydrolysis of glutamine to ammonia, which is used by the large (or ammonia) chain to synthesize carbamoyl phosphate.

Its subcellular location is the mitochondrion matrix. The enzyme catalyses hydrogencarbonate + L-glutamine + 2 ATP + H2O = carbamoyl phosphate + L-glutamate + 2 ADP + phosphate + 2 H(+). The catalysed reaction is L-glutamine + H2O = L-glutamate + NH4(+). It participates in amino-acid biosynthesis; L-arginine biosynthesis; carbamoyl phosphate from bicarbonate: step 1/1. Its function is as follows. Small subunit of the arginine-specific carbamoyl phosphate synthase (CPSase). CPSase catalyzes the formation of carbamoyl phosphate from the ammonia moiety of glutamine, carbonate, and phosphate donated by ATP, the first step of the arginine biosynthetic pathway. The small subunit (glutamine amidotransferase) binds and cleaves glutamine to supply the large subunit with the substrate ammonia. The chain is Carbamoyl phosphate synthase arginine-specific small chain (cpa1) from Aspergillus oryzae (strain ATCC 42149 / RIB 40) (Yellow koji mold).